A 142-amino-acid polypeptide reads, in one-letter code: UPF0102 protein Bcep18194_A3391 (142 aa).

A disordered region spans residues 1–27; the sequence is MCHAAPARPGDGRGLPRAGDNFSGAAR.

This sequence belongs to the UPF0102 family.

The chain is UPF0102 protein Bcep18194_A3391 from Burkholderia lata (strain ATCC 17760 / DSM 23089 / LMG 22485 / NCIMB 9086 / R18194 / 383).